Consider the following 396-residue polypeptide: Ribosomal RNA large subunit methyltransferase I (396 aa).

One can recognise a PUA domain in the interval 2-79 (AVRIKLKPGR…REEEIDREFF (78 aa)).

This sequence belongs to the methyltransferase superfamily. RlmI family.

The protein localises to the cytoplasm. It carries out the reaction cytidine(1962) in 23S rRNA + S-adenosyl-L-methionine = 5-methylcytidine(1962) in 23S rRNA + S-adenosyl-L-homocysteine + H(+). Specifically methylates the cytosine at position 1962 (m5C1962) of 23S rRNA. This chain is Ribosomal RNA large subunit methyltransferase I, found in Shewanella sp. (strain ANA-3).